The sequence spans 312 residues: Pyridoxal kinase (312 aa).

At methionine 1 the chain carries N-acetylmethionine. Pyridoxal-binding residues include serine 12 and threonine 47. Residue threonine 47 participates in pyridoxal 5'-phosphate binding. Serine 59 carries the phosphoserine modification. Residue aspartate 113 coordinates ATP. Aspartate 113 lines the Na(+) pocket. Residue aspartate 118 coordinates Mg(2+). Position 148 (threonine 148) interacts with Na(+). 150–153 (NQFE) contributes to the ATP binding site. Serine 164 is modified (phosphoserine). Residue threonine 186 participates in Na(+) binding. ATP is bound at residue 186 to 187 (TS). Phosphoserine is present on serine 213. Residues 226 to 228 (VDA) and threonine 233 each bind ATP. A pyridoxal 5'-phosphate-binding site is contributed by 234-235 (GD). Aspartate 235 serves as the catalytic Proton acceptor. A Phosphoserine modification is found at serine 285.

It belongs to the pyridoxine kinase family. Homodimer. Mg(2+) is required as a cofactor. It depends on Zn(2+) as a cofactor. The cofactor is Co(2+). Requires Mn(2+) as cofactor. In terms of tissue distribution, ubiquitous. Highly expressed in testis. As to expression, in adult testis and spermatozoa.

The protein resides in the cytoplasm. Its subcellular location is the cytosol. The catalysed reaction is pyridoxal + ATP = pyridoxal 5'-phosphate + ADP + H(+). The enzyme catalyses pyridoxamine + ATP = pyridoxamine 5'-phosphate + ADP + H(+). It catalyses the reaction pyridoxine + ATP = pyridoxine 5'-phosphate + ADP + H(+). It functions in the pathway cofactor metabolism; pyridoxal 5'-phosphate salvage; pyridoxal 5'-phosphate from pyridoxal: step 1/1. The protein operates within cofactor metabolism; pyridoxal 5'-phosphate salvage; pyridoxine 5'-phosphate from pyridoxine: step 1/1. It participates in cofactor metabolism; pyridoxal 5'-phosphate salvage; pyridoxamine 5'-phosphate from pyridoxamine: step 1/1. With respect to regulation, catalytic activity is inhibited competitively by 4-deoxypyridoxine, and is also inhibited by the benzodiazepine receptor ligands 1012S and ethyl-beta-carboline-3-carboxylate. Inhibited by ginkgotoxin, theophylline, lamotrigine, enprofylline, theobromine, and caffeine. Activity is increased in the presence of K(+)or Na(+). Its function is as follows. Catalyzes the phosphorylation of the dietary vitamin B6 vitamers pyridoxal (PL), pyridoxine (PN) and pyridoxamine (PM) to form pyridoxal 5'-phosphate (PLP), pyridoxine 5'-phosphate (PNP) and pyridoxamine 5'-phosphate (PMP), respectively. PLP is the active form of vitamin B6, and acts as a cofactor for over 140 different enzymatic reactions. This Homo sapiens (Human) protein is Pyridoxal kinase.